The primary structure comprises 20 residues: Short cationic peptide-4b (20 aa).

Glu20 carries the post-translational modification Glutamic acid 1-amide.

Expressed by the venom gland.

The protein localises to the secreted. The polypeptide is Short cationic peptide-4b (Cupiennius salei (American wandering spider)).